A 365-amino-acid chain; its full sequence is Putative glutamate--cysteine ligase 2-3 (365 aa).

Belongs to the glutamate--cysteine ligase type 2 family. YbdK subfamily.

It catalyses the reaction L-cysteine + L-glutamate + ATP = gamma-L-glutamyl-L-cysteine + ADP + phosphate + H(+). Functionally, ATP-dependent carboxylate-amine ligase which exhibits weak glutamate--cysteine ligase activity. In Mycolicibacterium smegmatis (strain ATCC 700084 / mc(2)155) (Mycobacterium smegmatis), this protein is Putative glutamate--cysteine ligase 2-3.